Here is a 504-residue protein sequence, read N- to C-terminus: Pyrichalasin C-7 hydroxylase (504 aa).

A signal peptide spans 1-17 (MLNSAACIVLAITAVLG). Cys449 contributes to the heme binding site.

The protein belongs to the cytochrome P450 family. Heme serves as cofactor.

It participates in mycotoxin biosynthesis. In terms of biological role, cytochrome P450 monooxygenase; part of the gene cluster that mediates the biosynthesis of the mycotoxin pyrichalasin H, a tyrosine-derived cytochalasan that inhibits the growth of rice seedlings, but also inhibits lymphocyte capping and actin polymerization and alters cell morphology. Pyrichalasin H is indicated as the responsible agent for the genus-specific pathogenicity of M.grisea toward crabgrass. The first step in the pathway is catalyzed by the O-methyltransferase pyiA which methylates free tyrosine to generate the precursor O-methyltyrosine. The hybrid PKS-NRPS pyiS, assisted by the enoyl reductase pyiC, are responsible for fusion of the O-methyltyrosine precursor and the polyketide backbone. The polyketide synthase module (PKS) of pyiS is responsible for the synthesis of the polyketide backbone and the downstream nonribosomal peptide synthetase (NRPS) amidates the carboxyl end of the polyketide with the O-methyltyrosine precursor. As the NRPS A-domain demonstrates substrate tolerance, pyiS can also use phenylalanine, tyrosine and even para-chlorophenylalanine as amino acid precursor, which leads to the production of novel cytochalasans, including halogenated cytochalasans. Because pyiS lacks a designated enoylreductase (ER) domain, the required activity is provided the enoyl reductase pyiC. Reduction by the hydrolyase pyiE leads to 1,5-dihydropyrrolone, which is substrate for dehydration and intra-molecular Diels-Alder cyclization by the Diels-Alderase pyiF to yield the required isoindolone-fused macrocycle. The tailoring cytochrome P450 monooxygenases piyD and piyG catalyze the hydroxylation at C-18 and C-7, respectivily, whereas the short-chain dehydrogenase/reductase pyiH reduces the carbonyl at C-21 in preparation for the transfer of an acetyl group by the acetyltransferase pyiB. These 3 reactions whose order is not clear yet, lead to the production of O-methylpyrichalasin J, a deacetylated pyrichalasin H. Finally, pyiB to converts O-methylpyrichalasin J into the final product pyrichalasin H via acetylation of C-21. This chain is Pyrichalasin C-7 hydroxylase, found in Pyricularia grisea (Crabgrass-specific blast fungus).